A 634-amino-acid polypeptide reads, in one-letter code: Pescadillo homolog (634 aa).

The BRCT domain occupies 321–414; sequence RLRTLFKGLK…QLLPTNKYFM (94 aa). Disordered regions lie at residues 437–473, 491–561, and 603–634; these read EEKA…EEIE, EYKK…RKAE, and NIDA…LKMA. Residue Ser453 is modified to Phosphoserine. 2 stretches are compositionally biased toward acidic residues: residues 454-473 and 501-527; these read DDDD…EEIE and VNED…DVEQ. 2 coiled-coil regions span residues 460–546 and 596–629; these read SDAE…KVES and LLRK…AAAK. 2 stretches are compositionally biased toward basic and acidic residues: residues 528 to 548 and 603 to 623; these read LDDK…ESGK and NIDA…KKAA. Positions 624–634 are enriched in low complexity; sequence AEAAAKALKMA.

Belongs to the pescadillo family.

The protein resides in the nucleus. Its subcellular location is the nucleolus. It is found in the nucleoplasm. In terms of biological role, required for maturation of ribosomal RNAs and formation of the large ribosomal subunit. In Drosophila willistoni (Fruit fly), this protein is Pescadillo homolog.